We begin with the raw amino-acid sequence, 235 residues long: Proteasome subunit alpha type-2 (235 aa).

This sequence belongs to the peptidase T1A family. As to quaternary structure, the 26S proteasome consists of a 20S proteasome core and two 19S regulatory subunits. The 20S proteasome core is composed of 28 subunits that are arranged in four stacked rings, resulting in a barrel-shaped structure. The two end rings are each formed by seven alpha subunits, and the two central rings are each formed by seven beta subunits. The catalytic chamber with the active sites is on the inside of the barrel.

The protein resides in the cytoplasm. It is found in the nucleus. The proteasome is a multicatalytic proteinase complex which is characterized by its ability to cleave peptides with Arg, Phe, Tyr, Leu, and Glu adjacent to the leaving group at neutral or slightly basic pH. The proteasome has an ATP-dependent proteolytic activity. This Oryza sativa subsp. indica (Rice) protein is Proteasome subunit alpha type-2 (PAB1).